The primary structure comprises 250 residues: Imidazole glycerol phosphate synthase subunit HisF (250 aa).

Catalysis depends on residues Asp11 and Asp130.

Belongs to the HisA/HisF family. In terms of assembly, heterodimer of HisH and HisF.

It is found in the cytoplasm. The catalysed reaction is 5-[(5-phospho-1-deoxy-D-ribulos-1-ylimino)methylamino]-1-(5-phospho-beta-D-ribosyl)imidazole-4-carboxamide + L-glutamine = D-erythro-1-(imidazol-4-yl)glycerol 3-phosphate + 5-amino-1-(5-phospho-beta-D-ribosyl)imidazole-4-carboxamide + L-glutamate + H(+). Its pathway is amino-acid biosynthesis; L-histidine biosynthesis; L-histidine from 5-phospho-alpha-D-ribose 1-diphosphate: step 5/9. Its function is as follows. IGPS catalyzes the conversion of PRFAR and glutamine to IGP, AICAR and glutamate. The HisF subunit catalyzes the cyclization activity that produces IGP and AICAR from PRFAR using the ammonia provided by the HisH subunit. This chain is Imidazole glycerol phosphate synthase subunit HisF, found in Bacteroides fragilis (strain ATCC 25285 / DSM 2151 / CCUG 4856 / JCM 11019 / LMG 10263 / NCTC 9343 / Onslow / VPI 2553 / EN-2).